Here is a 310-residue protein sequence, read N- to C-terminus: Methionyl-tRNA formyltransferase (310 aa).

A (6S)-5,6,7,8-tetrahydrofolate-binding site is contributed by Ser110–Pro113.

It belongs to the Fmt family.

It carries out the reaction L-methionyl-tRNA(fMet) + (6R)-10-formyltetrahydrofolate = N-formyl-L-methionyl-tRNA(fMet) + (6S)-5,6,7,8-tetrahydrofolate + H(+). Attaches a formyl group to the free amino group of methionyl-tRNA(fMet). The formyl group appears to play a dual role in the initiator identity of N-formylmethionyl-tRNA by promoting its recognition by IF2 and preventing the misappropriation of this tRNA by the elongation apparatus. This Streptomyces coelicolor (strain ATCC BAA-471 / A3(2) / M145) protein is Methionyl-tRNA formyltransferase.